The primary structure comprises 748 residues: MEENCDSTENPHSQGRQNATKCGWLRKQGGFVKTWHTRWFVLKGDQLHYFKDEDETKPLGTIFLPGNKVIEHPCNEESPGKFLFEVVPGGERDRMTANHESYLLMASTQNDMEDWVKSIRRVIWGPFGGGIFGQKLEDTVRYEKRYGNRLAPMLVEQCVDFIRQRGLKEEGLFRLPGQANLVKELQDAFDCGEKPSFDSNTDVHTVASLLKLYLRELPEPVVPYAKYEDFLSCATLLSKEEEAGVKELTKQVKSLPVVNYNLLKYICRFLDEVQSYSGVNKMSAQNLATVFGPNILRPKVEDPLTIMEGTVVVQQLMSVMISKHDRLFPKDTEPQSKPQEGPNSNNNDGHKKVTMGQLQNKENNNTKESPVRRCSWDKPESPQRSSMDNGSPTALSGSKTNSPRNSIHKLDVSRSPPLTVKKNPAFNKGSGIVTNGSFSSSNAEGVEKTQTTPNGSLQARRTSSLKSSGTKMGTHSVQNGTVRMGILNTDTLGNSLNGRSMSWLPNGYVTLRDNKQKEPAGESGQHNRLSTYDNVHQQFSLMNLDDKHSVDSATWSTSSCEISLPENSNSCRSSTTTCPEQDFYGGNFEDPVLDGPPQDDLSHPGDYENKSDRRSVGGRSSRATSSSDNSETFVGNTSSNHSALHSLVSSLKQEMTKQKIEYESRIKSLEQRNLTLETEMLNLHDELDQERKKFTMIEIKMRNAERAKEDAEKRNDMLQKEMEQFFSTFGDLTVEPRRSERGNTIWIQ.

A PH domain is found at 18–124 (NATKCGWLRK…WVKSIRRVIW (107 aa)). The 195-residue stretch at 134–328 (QKLEDTVRYE…VMISKHDRLF (195 aa)) folds into the Rho-GAP domain. The tract at residues 328–476 (FPKDTEPQSK…SSGTKMGTHS (149 aa)) is disordered. Composition is skewed to polar residues over residues 335–347 (QSKPQEGPNSNNN) and 356–368 (GQLQNKENNNTKE). A phosphoserine mark is found at S369, S391, S396, S398, S402, S413, S415, and S437. The span at 369–381 (SPVRRCSWDKPES) shows a compositional bias: basic and acidic residues. The segment covering 382–405 (PQRSSMDNGSPTALSGSKTNSPRN) has biased composition (polar residues). Residues 432–476 (IVTNGSFSSSNAEGVEKTQTTPNGSLQARRTSSLKSSGTKMGTHS) are compositionally biased toward polar residues. T452 is modified (phosphothreonine). The residue at position 495 (S495) is a Phosphoserine. The interval 582 to 640 (DFYGGNFEDPVLDGPPQDDLSHPGDYENKSDRRSVGGRSSRATSSSDNSETFVGNTSSN) is disordered. The span at 600-615 (DLSHPGDYENKSDRRS) shows a compositional bias: basic and acidic residues. Residues 617–630 (GGRSSRATSSSDNS) show a composition bias toward low complexity. Over residues 631–640 (ETFVGNTSSN) the composition is skewed to polar residues. Residues 649–729 (SSLKQEMTKQ…KEMEQFFSTF (81 aa)) adopt a coiled-coil conformation.

In terms of assembly, interacts with FLNA. Phosphorylated by ROCK, leading to activate the RacGAP activity.

Its subcellular location is the cytoplasm. The protein localises to the cytoskeleton. It is found in the cell junction. It localises to the adherens junction. The protein resides in the focal adhesion. Its subcellular location is the cell projection. Its function is as follows. Rho GTPase-activating protein involved in cell polarity, cell morphology and cytoskeletal organization. Acts as a GTPase activator for the Rac-type GTPase by converting it to an inactive GDP-bound state. Controls actin remodeling by inactivating Rac downstream of Rho leading to suppress leading edge protrusion and promotes cell retraction to achieve cellular polarity. Able to suppress RAC1 and CDC42 activity in vitro. Overexpression induces cell rounding with partial or complete disruption of actin stress fibers and formation of membrane ruffles, lamellipodia, and filopodia. Isoform 2 is a vascular cell-specific GAP involved in modulation of angiogenesis. The sequence is that of Rho GTPase-activating protein 24 (Arhgap24) from Rattus norvegicus (Rat).